The following is a 251-amino-acid chain: Putative cysteine-rich repeat secretory protein 36 (251 aa).

The first 28 residues, methionine 1–serine 28, serve as a signal peptide directing secretion. 2 Gnk2-homologous domains span residues tyrosine 35–proline 139 and tyrosine 144–phenylalanine 248.

It belongs to the cysteine-rich repeat secretory protein family.

It localises to the secreted. The chain is Putative cysteine-rich repeat secretory protein 36 (CRRSP36) from Arabidopsis thaliana (Mouse-ear cress).